Reading from the N-terminus, the 489-residue chain is Glutamyl-tRNA(Gln) amidotransferase subunit A (489 aa).

Catalysis depends on charge relay system residues Lys-75 and Ser-150. Ser-174 acts as the Acyl-ester intermediate in catalysis.

It belongs to the amidase family. GatA subfamily. Heterotrimer of A, B and C subunits.

It catalyses the reaction L-glutamyl-tRNA(Gln) + L-glutamine + ATP + H2O = L-glutaminyl-tRNA(Gln) + L-glutamate + ADP + phosphate + H(+). Functionally, allows the formation of correctly charged Gln-tRNA(Gln) through the transamidation of misacylated Glu-tRNA(Gln) in organisms which lack glutaminyl-tRNA synthetase. The reaction takes place in the presence of glutamine and ATP through an activated gamma-phospho-Glu-tRNA(Gln). The polypeptide is Glutamyl-tRNA(Gln) amidotransferase subunit A (Gloeobacter violaceus (strain ATCC 29082 / PCC 7421)).